Reading from the N-terminus, the 282-residue chain is UPF0759 protein YunF (282 aa).

Belongs to the UPF0759 family.

This Bacillus subtilis (strain 168) protein is UPF0759 protein YunF (yunF).